The primary structure comprises 154 residues: Protein SprT-like (154 aa).

One can recognise a SprT-like domain in the interval 6 to 144 (LQQLTETISL…CGTCHGKLKF (139 aa)). His67 is a binding site for Zn(2+). Glu68 is an active-site residue. Position 71 (His71) interacts with Zn(2+).

This sequence belongs to the SprT family. Zn(2+) serves as cofactor.

The protein localises to the cytoplasm. The sequence is that of Protein SprT-like from Shouchella clausii (strain KSM-K16) (Alkalihalobacillus clausii).